The primary structure comprises 244 residues: Ribosome-inactivating protein cucurmosin (244 aa).

Catalysis depends on residues tyrosine 70, tyrosine 109, glutamate 158, and arginine 161. Asparagine 189 and asparagine 225 each carry an N-linked (GlcNAc...) asparagine glycan.

Belongs to the ribosome-inactivating protein family. Type 1 RIP subfamily. In terms of processing, the N-linked glycan consists of GlcNAc2Man3Xyl.

It catalyses the reaction Endohydrolysis of the N-glycosidic bond at one specific adenosine on the 28S rRNA.. In terms of biological role, has cytotoxic activity towards cancer cells, but not normal cells. Inhibits the growth of the human leukemia cell line K562, the murine melanoma cell line B16 and the lung adenocarcinoma cell line A549 with IC(50) values of 88.1 nM, 63.4 nM and 359.3 nM respectively. In Cucurbita moschata (Winter crookneck squash), this protein is Ribosome-inactivating protein cucurmosin.